The following is a 174-amino-acid chain: Protein C2-DOMAIN ABA-RELATED 6 (174 aa).

A C2 domain is found at 1 to 115 (MEKTEEEVEM…HKLGLKELPH (115 aa)). The Ca(2+) site is built by Arg30, Asp31, Asp36, Asp82, Lys83, Asp84, and Asp90.

It belongs to the plant CAR protein family. As to quaternary structure, binds to PYR/PYL/RCAR abscisic acid intracellular receptors in an ABA-independent manner, both at the plasma membrane and in the nucleus. Subunit of a complex made of CAR6, PHOT1 and RPT3/NPH3. Interacts directly with RPT3/NPH3.

The protein resides in the cell membrane. It localises to the nucleus. Its function is as follows. Stimulates the GTPase/ATPase activities of Obg-like ATPases. Mediates the transient calcium-dependent interaction of PYR/PYL/RCAR abscisic acid (ABA) receptors with the plasma membrane and thus regulates ABA sensitivity. Prevents hypocotyl bending as well as gravitropic response under blue light conditions. The sequence is that of Protein C2-DOMAIN ABA-RELATED 6 from Arabidopsis thaliana (Mouse-ear cress).